A 912-amino-acid chain; its full sequence is Effector protein hopAE1 (912 aa).

The span at 1-13 shows a compositional bias: polar residues; that stretch reads MMPSQITRSSHSS. The interval 1–32 is disordered; the sequence is MMPSQITRSSHSSLPEVAPASGDATGVSEQTP.

Belongs to the HopW family.

The protein resides in the secreted. The polypeptide is Effector protein hopAE1 (hopAE1) (Pseudomonas savastanoi pv. phaseolicola (strain 1448A / Race 6) (Pseudomonas syringae pv. phaseolicola (strain 1448A / Race 6))).